Here is a 493-residue protein sequence, read N- to C-terminus: Activin receptor type-1C (493 aa).

The signal sequence occupies residues 1–25; that stretch reads MTPARRSALSLALLLVALASDLAAG. Residues 26 to 113 lie on the Extracellular side of the membrane; sequence LKCVCLLCDS…PDAPRLGPTE (88 aa). Residues 114-134 form a helical membrane-spanning segment; sequence LTVVITVPVCLLSIAAMLTIW. Topologically, residues 135 to 493 are cytoplasmic; that stretch reads ACQDRQCTYR…QLCVKEDCKA (359 aa). Residues 165 to 194 enclose the GS domain; it reads KTLKDLIYDATASGSGSGPPLLVQRTIART. The 291-residue stretch at 195-485 folds into the Protein kinase domain; it reads IVLQEIVGKG…LRVKKTISQL (291 aa). Residues 201–209 and K222 contribute to the ATP site; that span reads VGKGRFGEV. Catalysis depends on D323, which acts as the Proton acceptor.

Belongs to the protein kinase superfamily. TKL Ser/Thr protein kinase family. TGFB receptor subfamily. In terms of assembly, binds the type 2 receptor protein ACVR2A. It depends on Mg(2+) as a cofactor. Mn(2+) is required as a cofactor. As to expression, expressed in brain, kidney, lung, liver, testis, ovary, adrenal gland, heart, prostate, gastrointestinal tract, and spleen. Distributed throughout both adult and embryonic central nervous system and pancreatic islet cells.

Its subcellular location is the membrane. It catalyses the reaction L-threonyl-[receptor-protein] + ATP = O-phospho-L-threonyl-[receptor-protein] + ADP + H(+). The catalysed reaction is L-seryl-[receptor-protein] + ATP = O-phospho-L-seryl-[receptor-protein] + ADP + H(+). In terms of biological role, serine/threonine protein kinase which forms a receptor complex on ligand binding. The receptor complex consists of 2 type II and 2 type I transmembrane serine/threonine kinases. Type II receptors phosphorylate and activate type I receptors which autophosphorylate, then bind and activate SMAD transcriptional regulators, SMAD2 and SMAD3. Receptor for activin AB, activin B, activin E and NODAL. Upon NODAL binding, activation results in increased apoptosis and reduced proliferation through suppression of AKT signaling and the activation of Smad2-dependent signaling pathway in pancreatic beta-cells, trophoblasts, epithelial or neuronal cells. Acts as a positive regulator for macrophage activation partially through down-regulation of PPARG expression. The chain is Activin receptor type-1C from Rattus norvegicus (Rat).